Consider the following 23-residue polypeptide: Conolysin-Mt1 (23 aa).

Residue S22 is modified to Serine amide.

Expressed by the venom duct.

The protein resides in the secreted. Its function is as follows. This cytolytic peptide has ability to disrupt the integrity of cell membranes from both prokaryotes and eukaryotes. It permeabilizes both negatively charged prokaryotic (PE:PG) and zwitterionic eukaryotic (PC:cholesterol) model membranes. It has potent hemolytic activity on human erythrocytes and exhibits low antimicrobial activity against the Gram-negative bacterium E.coli (MIC&gt;50 uM) and the Gram-positive bacterium S.aureus (MIC=25-50 uM). Intracranial injection causes mice to shuffle backward until the encounter an obstacle, at which time the mouse jump into the air. The backward shuffle is reminiscent to the signature dance 'moonwalk' that gained widespread popularity after being performed by Michael Jackson. In Conus mustelinus (Weasel cone), this protein is Conolysin-Mt1.